The primary structure comprises 111 residues: Cell division protein FtsB (111 aa).

The Cytoplasmic portion of the chain corresponds to 1-3; the sequence is MRL. The helical transmembrane segment at 4–21 threads the bilayer; that stretch reads ITLFLLLLLLAIQYPLWL. Residues 22 to 111 are Periplasmic-facing; sequence GKGGWLRVWD…PPPAGQQAHH (90 aa). Residues 31 to 64 adopt a coiled-coil conformation; that stretch reads DMQKQVTAQNQRNAELKQRNTKLEGEVKDLKEGT. Positions 89–111 are disordered; the sequence is APAPKTSETPLPPPPPAGQQAHH.

The protein belongs to the FtsB family. In terms of assembly, part of a complex composed of FtsB, FtsL and FtsQ.

It is found in the cell inner membrane. Functionally, essential cell division protein. May link together the upstream cell division proteins, which are predominantly cytoplasmic, with the downstream cell division proteins, which are predominantly periplasmic. The chain is Cell division protein FtsB from Ralstonia pickettii (strain 12J).